The sequence spans 129 residues: Small ribosomal subunit protein uS11 (129 aa).

It belongs to the universal ribosomal protein uS11 family. As to quaternary structure, part of the 30S ribosomal subunit. Interacts with proteins S7 and S18. Binds to IF-3.

In terms of biological role, located on the platform of the 30S subunit, it bridges several disparate RNA helices of the 16S rRNA. Forms part of the Shine-Dalgarno cleft in the 70S ribosome. The protein is Small ribosomal subunit protein uS11 of Bacillus mycoides (strain KBAB4) (Bacillus weihenstephanensis).